The chain runs to 72 residues: Movement protein TGBp3 (72 aa).

Topologically, residues 1–2 are lumenal; the sequence is MS. Residues 3–23 form a helical membrane-spanning segment; sequence LSFSLIVFAVGVAVSIGVLTL. Topologically, residues 24–72 are cytoplasmic; sequence TTQQSSSYCLILVDGAKAVVEGCHLRQDIPAILSELKPASSPFNPLFCS.

Belongs to the Tymovirales TGBp3 protein family.

It localises to the host endoplasmic reticulum membrane. Plays a role in viral cell-to-cell propagation, by facilitating genome transport to neighboring plant cells through plasmosdesmata. May induce the formation of granular vesicles derived from the Endoplasmic reticulum, which align on actin filaments. The chain is Movement protein TGBp3 (ORF4) from Lolium latent virus (isolate Lolium/USA/US1/-) (LoLV).